The sequence spans 377 residues: UPF0754 membrane protein LMOf2365_2257 (377 aa).

2 helical membrane-spanning segments follow: residues 1-21 and 357-377; these read MSVLFTILLMAVIGGFIGAMT and YLGGILGGFIGIIQGVLAMWI.

This sequence belongs to the UPF0754 family.

The protein localises to the cell membrane. The chain is UPF0754 membrane protein LMOf2365_2257 from Listeria monocytogenes serotype 4b (strain F2365).